Consider the following 397-residue polypeptide: MFPTDPVSNLAALIRCPSVTPAEGGALAALEAMLAPVGFKVDRVVAKEPGTPDIENLYARTGGEGPHLMFAGHTDVVPVGDEAAWSRPPFSAAIAEGEMYGRGAVDMKGGIACFVAAVARHIEKHGAPKGSISFLITGDEEGPAINGTVKLLEWAAARGERWDACLVGEPTNPDCIGDMIKIGRRGSLSGRITVHGVQGHAAYPHLADNPVRSILQIAQALMDPPFDDGTENFQPSNLEVTTIDVGNTAVNVIPAKASAAFNIRFNDRWTAESLMAEIVARLDRAAAGSALRPGRAPARYEIVWNERPSHVFLTRNNALIDSLSGAVEAVTGRQPQLSTTGGTSDARFIKDYCPVVEFGLVGKTMHMVDERVALADLETLTGIYETFIARWFGHAAA.

A Zn(2+)-binding site is contributed by His73. Asp75 is a catalytic residue. A Zn(2+)-binding site is contributed by Asp106. Catalysis depends on Glu140, which acts as the Proton acceptor. Glu141, Glu169, and His366 together coordinate Zn(2+).

This sequence belongs to the peptidase M20A family. DapE subfamily. As to quaternary structure, homodimer. Zn(2+) serves as cofactor. Co(2+) is required as a cofactor.

The enzyme catalyses N-succinyl-(2S,6S)-2,6-diaminopimelate + H2O = (2S,6S)-2,6-diaminopimelate + succinate. The protein operates within amino-acid biosynthesis; L-lysine biosynthesis via DAP pathway; LL-2,6-diaminopimelate from (S)-tetrahydrodipicolinate (succinylase route): step 3/3. Its function is as follows. Catalyzes the hydrolysis of N-succinyl-L,L-diaminopimelic acid (SDAP), forming succinate and LL-2,6-diaminopimelate (DAP), an intermediate involved in the bacterial biosynthesis of lysine and meso-diaminopimelic acid, an essential component of bacterial cell walls. The protein is Succinyl-diaminopimelate desuccinylase of Rhizobium meliloti (strain 1021) (Ensifer meliloti).